We begin with the raw amino-acid sequence, 169 residues long: MPLLDSFTVDHTRMNAPAVRVAKTMSTPKGDTITVFDLRFCAPNKDILSERGIHTLEHLFAGFMRDHLNGEGVEIIDISPMGCRTGFYMSLIGEPAEKRVADAWLAAMEDVLNVVDQKAIPELNEYQCGTYEMHSLSQAQDIAKAVIAAGISVNRNDELKLSDEILHKL.

H54, H58, and C128 together coordinate Fe cation.

Belongs to the LuxS family. As to quaternary structure, homodimer. Requires Fe cation as cofactor.

It catalyses the reaction S-(5-deoxy-D-ribos-5-yl)-L-homocysteine = (S)-4,5-dihydroxypentane-2,3-dione + L-homocysteine. Its function is as follows. Involved in the synthesis of autoinducer 2 (AI-2) which is secreted by bacteria and is used to communicate both the cell density and the metabolic potential of the environment. The regulation of gene expression in response to changes in cell density is called quorum sensing. Catalyzes the transformation of S-ribosylhomocysteine (RHC) to homocysteine (HC) and 4,5-dihydroxy-2,3-pentadione (DPD). The protein is S-ribosylhomocysteine lyase of Shewanella amazonensis (strain ATCC BAA-1098 / SB2B).